Consider the following 397-residue polypeptide: Anhydro-N-acetylmuramic acid kinase (397 aa).

21-28 (GTSLDGVD) serves as a coordination point for ATP. The span at 373-384 (TPTNLPSVTGAS) shows a compositional bias: polar residues. The disordered stretch occupies residues 373–397 (TPTNLPSVTGASARTPLGSLSVPGP).

It belongs to the anhydro-N-acetylmuramic acid kinase family.

The enzyme catalyses 1,6-anhydro-N-acetyl-beta-muramate + ATP + H2O = N-acetyl-D-muramate 6-phosphate + ADP + H(+). The protein operates within amino-sugar metabolism; 1,6-anhydro-N-acetylmuramate degradation. It functions in the pathway cell wall biogenesis; peptidoglycan recycling. Catalyzes the specific phosphorylation of 1,6-anhydro-N-acetylmuramic acid (anhMurNAc) with the simultaneous cleavage of the 1,6-anhydro ring, generating MurNAc-6-P. Is required for the utilization of anhMurNAc either imported from the medium or derived from its own cell wall murein, and thus plays a role in cell wall recycling. This chain is Anhydro-N-acetylmuramic acid kinase, found in Salinibacter ruber (strain DSM 13855 / M31).